Reading from the N-terminus, the 474-residue chain is Chromosomal replication initiator protein DnaA (474 aa).

A domain I, interacts with DnaA modulators region spans residues 1–73 (MTNIEQERWS…LSCWQAEMPE (73 aa)). Positions 73-130 (EVHRIDLTVRTAMRCAAPAKEQAAPIEPRREDNRAAAHDLRVSATAPVSANHEALGGS) are domain II. The domain III, AAA+ region stretch occupies residues 131 to 353 (PLDPRLTFSS…GAINRLLAHS (223 aa)). Residues glycine 178, glycine 180, lysine 181, and threonine 182 each coordinate ATP. A domain IV, binds dsDNA region spans residues 354-474 (KLNAQPVTLE…VESLKRQLQE (121 aa)).

Belongs to the DnaA family. Oligomerizes as a right-handed, spiral filament on DNA at oriC.

Its subcellular location is the cytoplasm. In terms of biological role, plays an essential role in the initiation and regulation of chromosomal replication. ATP-DnaA binds to the origin of replication (oriC) to initiate formation of the DNA replication initiation complex once per cell cycle. Binds the DnaA box (a 9 base pair repeat at the origin) and separates the double-stranded (ds)DNA. Forms a right-handed helical filament on oriC DNA; dsDNA binds to the exterior of the filament while single-stranded (ss)DNA is stabiized in the filament's interior. The ATP-DnaA-oriC complex binds and stabilizes one strand of the AT-rich DNA unwinding element (DUE), permitting loading of DNA polymerase. After initiation quickly degrades to an ADP-DnaA complex that is not apt for DNA replication. Binds acidic phospholipids. This is Chromosomal replication initiator protein DnaA from Rhodopseudomonas palustris (strain BisA53).